The sequence spans 279 residues: Putative Delta(7)-sterol-C5(6)-desaturase 2 (279 aa).

2 helical membrane passes run 48-68 (LAGNILYFISGFLWCFYIYYL) and 127-147 (FLCFLYIALYLVLVEFMIYWV). The Fatty acid hydroxylase domain maps to 134–263 (ALYLVLVEFM…TIWMDWMFGS (130 aa)). Residues 148–152 (HKELH) carry the Histidine box-1 motif. The Histidine box-2 signature appears at 162-166 (HATHH). A helical membrane pass occupies residues 194 to 214 (HVIALFIVPIHLITHLSLLFL). The Histidine box-3 motif lies at 239-243 (HTIHH).

The protein belongs to the sterol desaturase family. Fe cation serves as cofactor.

It localises to the endoplasmic reticulum membrane. It carries out the reaction a Delta(7)-sterol + 2 Fe(II)-[cytochrome b5] + O2 + 2 H(+) = a Delta(5),Delta(7)-sterol + 2 Fe(III)-[cytochrome b5] + 2 H2O. The protein is Putative Delta(7)-sterol-C5(6)-desaturase 2 (HDF7) of Arabidopsis thaliana (Mouse-ear cress).